An 89-amino-acid polypeptide reads, in one-letter code: Acylphosphatase (89 aa).

Residues 4 to 89 enclose the Acylphosphatase-like domain; that stretch reads SYIAHISGRV…WQEHHFFSIG (86 aa). Active-site residues include arginine 19 and asparagine 37.

This sequence belongs to the acylphosphatase family.

It carries out the reaction an acyl phosphate + H2O = a carboxylate + phosphate + H(+). The protein is Acylphosphatase (acyP) of Colwellia psychrerythraea (strain 34H / ATCC BAA-681) (Vibrio psychroerythus).